Here is a 552-residue protein sequence, read N- to C-terminus: DNA ligase (552 aa).

Glu-229 serves as a coordination point for ATP. Lys-231 functions as the N6-AMP-lysine intermediate in the catalytic mechanism. 2 residues coordinate ATP: Arg-236 and Glu-283. The Mg(2+) site is built by Glu-283 and Glu-377. Positions 382 and 397 each coordinate ATP.

Belongs to the ATP-dependent DNA ligase family. As to quaternary structure, interacts with host TOP2A and TOP2B. Mg(2+) is required as a cofactor.

It localises to the host cytoplasm. It catalyses the reaction ATP + (deoxyribonucleotide)n-3'-hydroxyl + 5'-phospho-(deoxyribonucleotide)m = (deoxyribonucleotide)n+m + AMP + diphosphate.. In terms of biological role, DNA ligase that seals nicks in double-stranded DNA during DNA replication, DNA recombination and DNA repair. Recruits cellular topoisomerase II to sites of viral replication and assembly. The chain is DNA ligase (OPG180) from Vaccinia virus (strain Ankara) (VACV).